The chain runs to 347 residues: Dihydroorotase (347 aa).

Zn(2+)-binding residues include histidine 17 and histidine 19. Substrate contacts are provided by residues 19–21 (HLR) and asparagine 45. Positions 103, 140, and 178 each coordinate Zn(2+). Residue lysine 103 is modified to N6-carboxylysine. A substrate-binding site is contributed by histidine 140. Leucine 223 contributes to the substrate binding site. Aspartate 251 provides a ligand contact to Zn(2+). The active site involves aspartate 251. Histidine 255 and alanine 267 together coordinate substrate.

The protein belongs to the metallo-dependent hydrolases superfamily. DHOase family. Class II DHOase subfamily. In terms of assembly, homodimer. Zn(2+) is required as a cofactor.

The enzyme catalyses (S)-dihydroorotate + H2O = N-carbamoyl-L-aspartate + H(+). Its pathway is pyrimidine metabolism; UMP biosynthesis via de novo pathway; (S)-dihydroorotate from bicarbonate: step 3/3. Catalyzes the reversible cyclization of carbamoyl aspartate to dihydroorotate. This chain is Dihydroorotase, found in Pectobacterium carotovorum subsp. carotovorum (strain PC1).